The primary structure comprises 375 residues: Peroxisomal targeting signal 2 receptor (375 aa).

6 WD repeats span residues 58-89, 102-133, 172-203, 218-249, 281-312, and 340-372; these read LTQDCLFDLAWNESHENQVLVAQGDGTLRLFD, EHEREVFSCNWNLVNRQNFLSSSWDGSIKIWS, KNRNCVYQAQFSPHDQNLVLSCSGNSYASLFD, HSGLEALTCDFNKYRPYVVATGGVDNAIRIWD, AHGLAIRKVTWSPHHSNILMSASYDMTCRIWR, and QHSEFVFGADWSLWGKPGYVASTAWDGNLFVWN.

Belongs to the WD repeat peroxin-7 family. As to quaternary structure, interacts with PEX21.

The protein localises to the cytoplasm. It is found in the cytosol. It localises to the peroxisome matrix. Its function is as follows. Receptor required for the peroxisomal import of proteins containing a C-terminal PTS2-type peroxisomal targeting signal, such as 3-oxoacyl-CoA thiolase. Specifically binds to cargo proteins containing a PTS2 peroxisomal targeting signal in the cytosol. Cargo protein-binding triggers interaction with PEX21 and formation of a ternary complex composed of PEX21 and PEX7 along with PTS2-containing cargo proteins, which is tranlocated into peroxisomes by passing through the PEX13-PEX14 docking complex. The polypeptide is Peroxisomal targeting signal 2 receptor (Saccharomyces cerevisiae (strain ATCC 204508 / S288c) (Baker's yeast)).